Reading from the N-terminus, the 335-residue chain is MSQIESLSQIEGKLNNLSLLANENIKNAKSDSELDQLRVSLLGKKGELSIILKTMGKLSSVDRPIIGQKANLIKINLQDLITERKNQLISEAIDKQIEDEKIDVTIPSTGTLPGNKHPLISTQDEIIDIFCGLGYSVENGPEIESDFYNFESLNIPKNHPARDMQDTFYLDENRLLRTHTSPVQIRYLENNPPPVRIIAPGRVYRRDAVDATHSPVFNQVEVLCIDQDINFSHLRGTVLTFLKTFFGDIPVRFRASYFPFTEPSAEVDVQWKGKWLEVMGCGMVDPKVLEKLGIDSEKWTGFAAGLGVERFCMVRHQIDDIRRFYTNDLRFLKQF.

Glu-262 contacts Mg(2+).

This sequence belongs to the class-II aminoacyl-tRNA synthetase family. Phe-tRNA synthetase alpha subunit type 1 subfamily. Tetramer of two alpha and two beta subunits. Requires Mg(2+) as cofactor.

Its subcellular location is the cytoplasm. The enzyme catalyses tRNA(Phe) + L-phenylalanine + ATP = L-phenylalanyl-tRNA(Phe) + AMP + diphosphate + H(+). This Prochlorococcus marinus subsp. pastoris (strain CCMP1986 / NIES-2087 / MED4) protein is Phenylalanine--tRNA ligase alpha subunit.